Reading from the N-terminus, the 158-residue chain is MLNQLDNLTERVRGSNKLVYRWLHVRKHLLVAYYNLVGIKPGKESYMRLNEKALDDFCQSLVDYLSAGHFSIYERILHKLEGNGQLARAAKIWPQLEANTQQIMDDYDSSLETAIDHDNYLEFQQVLSDIGEALEARFVLEDKLILLVLDAARVKYPA.

Belongs to the Rsd/AlgQ family. As to quaternary structure, interacts with RpoD.

Its subcellular location is the cytoplasm. Its function is as follows. Binds RpoD and negatively regulates RpoD-mediated transcription activation by preventing the interaction between the primary sigma factor RpoD with the catalytic core of the RNA polymerase and with promoter DNA. May be involved in replacement of the RNA polymerase sigma subunit from RpoD to RpoS during the transition from exponential growth to the stationary phase. This Escherichia coli O127:H6 (strain E2348/69 / EPEC) protein is Regulator of sigma D.